Consider the following 200-residue polypeptide: Dephospho-CoA kinase (200 aa).

Positions 3–200 (RIGLTGGIGS…LIAEILSRVN (198 aa)) constitute a DPCK domain. 11–16 (GSGKST) contacts ATP.

The protein belongs to the CoaE family.

Its subcellular location is the cytoplasm. It catalyses the reaction 3'-dephospho-CoA + ATP = ADP + CoA + H(+). It participates in cofactor biosynthesis; coenzyme A biosynthesis; CoA from (R)-pantothenate: step 5/5. Functionally, catalyzes the phosphorylation of the 3'-hydroxyl group of dephosphocoenzyme A to form coenzyme A. The sequence is that of Dephospho-CoA kinase from Corynebacterium glutamicum (strain ATCC 13032 / DSM 20300 / JCM 1318 / BCRC 11384 / CCUG 27702 / LMG 3730 / NBRC 12168 / NCIMB 10025 / NRRL B-2784 / 534).